The following is a 190-amino-acid chain: Ribosome hibernation promotion factor (190 aa).

The protein belongs to the HPF/YfiA ribosome-associated protein family. Long HPF subfamily. As to quaternary structure, interacts with 100S ribosomes.

It is found in the cytoplasm. Functionally, required for dimerization of active 70S ribosomes into 100S ribosomes in stationary phase; 100S ribosomes are translationally inactive and sometimes present during exponential growth. The polypeptide is Ribosome hibernation promotion factor (Staphylococcus aureus (strain COL)).